The sequence spans 391 residues: Stearoyl-[acyl-carrier-protein] 9-desaturase 5, chloroplastic (391 aa).

The tract at residues 1–20 is disordered; that stretch reads MAFAPSHTASPSYCGVAQGG. Residues 1–32 constitute a chloroplast transit peptide; it reads MAFAPSHTASPSYCGVAQGGRRSNGMSPVVAM. Fe cation contacts are provided by Glu133, Glu171, His174, Glu224, Glu257, and His260.

This sequence belongs to the fatty acid desaturase type 2 family. Homodimer. It depends on Fe(2+) as a cofactor.

The protein localises to the plastid. The protein resides in the chloroplast. It carries out the reaction octadecanoyl-[ACP] + 2 reduced [2Fe-2S]-[ferredoxin] + O2 + 2 H(+) = (9Z)-octadecenoyl-[ACP] + 2 oxidized [2Fe-2S]-[ferredoxin] + 2 H2O. Its pathway is lipid metabolism; fatty acid metabolism. In terms of biological role, converts stearoyl-ACP to oleoyl-ACP by introduction of a cis double bond between carbons 9 and 10 of the acyl chain. This Oryza sativa subsp. indica (Rice) protein is Stearoyl-[acyl-carrier-protein] 9-desaturase 5, chloroplastic.